The following is a 257-amino-acid chain: tRNA pseudouridine synthase A (257 aa).

Asp-43 functions as the Nucleophile in the catalytic mechanism. Residue Tyr-94 coordinates substrate.

The protein belongs to the tRNA pseudouridine synthase TruA family.

It catalyses the reaction uridine(38/39/40) in tRNA = pseudouridine(38/39/40) in tRNA. Its function is as follows. Formation of pseudouridine at positions 38, 39 and 40 in the anticodon stem and loop of transfer RNAs. The polypeptide is tRNA pseudouridine synthase A (Pyrobaculum calidifontis (strain DSM 21063 / JCM 11548 / VA1)).